Here is a 764-residue protein sequence, read N- to C-terminus: Probable glutamate--tRNA ligase, cytoplasmic (764 aa).

228–230 (RFP) is an L-glutamate binding site. A 'HIGH' region motif is present at residues 233-242 (PSGYMHIGHC). His-238 contacts ATP. Residues Asp-264, 404–408 (YDFAC), and Arg-422 each bind L-glutamate. Residues Glu-425 and 460-464 (LLSKR) contribute to the ATP site. The 'KMSKS' region signature appears at 460–464 (LLSKR).

It belongs to the class-I aminoacyl-tRNA synthetase family. Glutamate--tRNA ligase type 2 subfamily.

The protein resides in the cytoplasm. The enzyme catalyses tRNA(Glu) + L-glutamate + ATP = L-glutamyl-tRNA(Glu) + AMP + diphosphate. In terms of biological role, catalyzes the attachment of glutamate to tRNA(Glu) in a two-step reaction: glutamate is first activated by ATP to form Glu-AMP and then transferred to the acceptor end of tRNA(Glu). The chain is Probable glutamate--tRNA ligase, cytoplasmic (gluS) from Dictyostelium discoideum (Social amoeba).